Consider the following 144-residue polypeptide: Large ribosomal subunit protein uL15 (144 aa).

The segment at 1 to 54 is disordered; that stretch reads MRLNTLSPAEGSKKAGKRLGRGIGSGLGKTGGRGHKGQKSRSGGGVRRGFEGGQ. Residues 21–31 show a composition bias toward gly residues; it reads RGIGSGLGKTG.

This sequence belongs to the universal ribosomal protein uL15 family. Part of the 50S ribosomal subunit.

In terms of biological role, binds to the 23S rRNA. In Salmonella enteritidis PT4 (strain P125109), this protein is Large ribosomal subunit protein uL15.